We begin with the raw amino-acid sequence, 381 residues long: E3 ubiquitin-protein ligase Fancl (381 aa).

The segment at 110 to 293 is UBC-RWD region (URD); it reads NIYYDILALY…MFDLCYFPMP (184 aa). The RING-CH-type; degenerate zinc-finger motif lies at 303–374; it reads EEDNEELRCN…PFCKAKLSTS (72 aa). Residues C311, C314, C329, C334, H339, C342, C364, and C367 each contribute to the Zn(2+) site.

In terms of assembly, interacts (via C-terminus) with FANCI and Fancd2.

Its subcellular location is the nucleus. The enzyme catalyses S-ubiquitinyl-[E2 ubiquitin-conjugating enzyme]-L-cysteine + [acceptor protein]-L-lysine = [E2 ubiquitin-conjugating enzyme]-L-cysteine + N(6)-ubiquitinyl-[acceptor protein]-L-lysine.. It functions in the pathway protein modification; protein ubiquitination. Functionally, ubiquitin ligase protein that mediates monoubiquitination of Fancd2. Ubiquitination of Fancd2 is stimulated by ionising radiation. Together with Fancd2, and probably FANCI, involved in DNA repair of damage caused by agents that induce interstrand cross-links but not agents that cause double strand breaks. This is E3 ubiquitin-protein ligase Fancl from Drosophila melanogaster (Fruit fly).